A 238-amino-acid polypeptide reads, in one-letter code: Orotidine 5'-phosphate decarboxylase (238 aa).

Substrate is bound by residues Asp-18, Lys-40, Asp-67–Thr-76, Thr-122, Arg-183, Gln-192, and Arg-213. The Proton donor role is filled by Lys-69.

This sequence belongs to the OMP decarboxylase family. Type 1 subfamily. In terms of assembly, homodimer.

The enzyme catalyses orotidine 5'-phosphate + H(+) = UMP + CO2. It functions in the pathway pyrimidine metabolism; UMP biosynthesis via de novo pathway; UMP from orotate: step 2/2. Its function is as follows. Catalyzes the decarboxylation of orotidine 5'-monophosphate (OMP) to uridine 5'-monophosphate (UMP). In Brucella abortus (strain S19), this protein is Orotidine 5'-phosphate decarboxylase.